A 770-amino-acid chain; its full sequence is NAD-dependent malic enzyme (770 aa).

The malic enzyme stretch occupies residues 1 to 440 (MNTGDKAKSQ…KLNRFVFRSG (440 aa)). Residue K107 is the Proton acceptor of the active site. Residues E149 and D150 each coordinate a divalent metal cation. D175 and N300 together coordinate NAD(+). The segment at 441-770 (FIMKPVFAAA…LAVVESSHPV (330 aa)) is phosphate acetyltransferase.

In the N-terminal section; belongs to the malic enzymes family. It in the C-terminal section; belongs to the phosphate acetyltransferase and butyryltransferase family. In terms of assembly, homooctamer. It depends on Mg(2+) as a cofactor. Mn(2+) is required as a cofactor.

The catalysed reaction is (S)-malate + NAD(+) = pyruvate + CO2 + NADH. Subject to substrate inhibition and shows allosteric regulation by acetyl-CoA. In terms of biological role, required for symbiotic nitrogen fixation. Plays a key role in the conversion of malate to acetyl-CoA for efficient tricarboxylic acid cycle function in nitrogen-fixating bacteria. This chain is NAD-dependent malic enzyme (dme), found in Rhizobium meliloti (strain 1021) (Ensifer meliloti).